The chain runs to 152 residues: NADH-quinone oxidoreductase subunit I 1 (152 aa).

2 4Fe-4S ferredoxin-type domains span residues 53-83 and 94-123; these read MKLG…MKSD and VTYV…LGTG. 8 residues coordinate [4Fe-4S] cluster: Cys-63, Cys-66, Cys-69, Cys-73, Cys-103, Cys-106, Cys-109, and Cys-113.

This sequence belongs to the complex I 23 kDa subunit family. As to quaternary structure, NDH-1 is composed of 14 different subunits. Subunits NuoA, H, J, K, L, M, N constitute the membrane sector of the complex. Requires [4Fe-4S] cluster as cofactor.

It localises to the cell inner membrane. The enzyme catalyses a quinone + NADH + 5 H(+)(in) = a quinol + NAD(+) + 4 H(+)(out). Functionally, NDH-1 shuttles electrons from NADH, via FMN and iron-sulfur (Fe-S) centers, to quinones in the respiratory chain. The immediate electron acceptor for the enzyme in this species is believed to be ubiquinone. Couples the redox reaction to proton translocation (for every two electrons transferred, four hydrogen ions are translocated across the cytoplasmic membrane), and thus conserves the redox energy in a proton gradient. The protein is NADH-quinone oxidoreductase subunit I 1 of Koribacter versatilis (strain Ellin345).